We begin with the raw amino-acid sequence, 328 residues long: tRNA uridine(34) hydroxylase (328 aa).

Residues 130–224 (LDEDTVVLDT…YGKDPEVQGE (95 aa)) enclose the Rhodanese domain. Cys-184 functions as the Cysteine persulfide intermediate in the catalytic mechanism.

This sequence belongs to the TrhO family.

The enzyme catalyses uridine(34) in tRNA + AH2 + O2 = 5-hydroxyuridine(34) in tRNA + A + H2O. Catalyzes oxygen-dependent 5-hydroxyuridine (ho5U) modification at position 34 in tRNAs. The polypeptide is tRNA uridine(34) hydroxylase (Streptococcus pyogenes serotype M28 (strain MGAS6180)).